The sequence spans 362 residues: tRNA-specific 2-thiouridylase MnmA (362 aa).

ATP-binding positions include 9-16 and Met35; that span reads GMSGGVDS. The interaction with target base in tRNA stretch occupies residues 95–97; sequence NPD. Catalysis depends on Cys100, which acts as the Nucleophile. Cys100 and Cys197 are oxidised to a cystine. Residue Gly124 coordinates ATP. Residues 147–149 form an interaction with tRNA region; the sequence is KDQ. Catalysis depends on Cys197, which acts as the Cysteine persulfide intermediate. Residues 309 to 310 are interaction with tRNA; it reads RY.

Belongs to the MnmA/TRMU family.

It is found in the cytoplasm. It carries out the reaction S-sulfanyl-L-cysteinyl-[protein] + uridine(34) in tRNA + AH2 + ATP = 2-thiouridine(34) in tRNA + L-cysteinyl-[protein] + A + AMP + diphosphate + H(+). In terms of biological role, catalyzes the 2-thiolation of uridine at the wobble position (U34) of tRNA, leading to the formation of s(2)U34. This chain is tRNA-specific 2-thiouridylase MnmA, found in Cupriavidus pinatubonensis (strain JMP 134 / LMG 1197) (Cupriavidus necator (strain JMP 134)).